We begin with the raw amino-acid sequence, 187 residues long: uncharacterized protein (187 aa).

This is an uncharacterized protein from Manihot esculenta (Cassava).